We begin with the raw amino-acid sequence, 647 residues long: Threonine--tRNA ligase (647 aa).

One can recognise a TGS domain in the interval 1-61 (MIKITFPDGA…EEDGSIEIVT (61 aa)). Residues 240 to 538 (DHRKLGKELD…LIETYKGAFP (299 aa)) form a catalytic region. Zn(2+) is bound by residues Cys-334, His-385, and His-515.

This sequence belongs to the class-II aminoacyl-tRNA synthetase family. Homodimer. Zn(2+) serves as cofactor.

The protein localises to the cytoplasm. The enzyme catalyses tRNA(Thr) + L-threonine + ATP = L-threonyl-tRNA(Thr) + AMP + diphosphate + H(+). Functionally, catalyzes the attachment of threonine to tRNA(Thr) in a two-step reaction: L-threonine is first activated by ATP to form Thr-AMP and then transferred to the acceptor end of tRNA(Thr). Also edits incorrectly charged L-seryl-tRNA(Thr). This is Threonine--tRNA ligase from Streptococcus pyogenes serotype M1.